A 198-amino-acid polypeptide reads, in one-letter code: Large ribosomal subunit protein bL21 (198 aa).

This sequence belongs to the bacterial ribosomal protein bL21 family. Part of the 50S ribosomal subunit. Contacts protein L20.

Functionally, this protein binds to 23S rRNA in the presence of protein L20. In Ruegeria sp. (strain TM1040) (Silicibacter sp.), this protein is Large ribosomal subunit protein bL21.